The chain runs to 380 residues: L-lactate dehydrogenase (380 aa).

An FMN hydroxy acid dehydrogenase domain is found at Met-1–Arg-380. Residue Tyr-24 coordinates substrate. Ser-106 and Gln-127 together coordinate FMN. Tyr-129 lines the substrate pocket. Thr-155 lines the FMN pocket. Arg-164 is a substrate binding site. Lys-251 serves as a coordination point for FMN. The Proton acceptor role is filled by His-275. Residue Arg-278 coordinates substrate. Asp-306–Arg-330 contacts FMN.

Belongs to the FMN-dependent alpha-hydroxy acid dehydrogenase family. FMN serves as cofactor.

It localises to the cell inner membrane. The enzyme catalyses (S)-lactate + A = pyruvate + AH2. Functionally, catalyzes the conversion of L-lactate to pyruvate. Is coupled to the respiratory chain. This chain is L-lactate dehydrogenase, found in Serratia proteamaculans (strain 568).